A 337-amino-acid chain; its full sequence is Viral cathepsin (337 aa).

A signal peptide spans 1–19 (MTLLMIFTILLVASSQIEG). The propeptide at 20 to 126 (HLKFDIHDAQ…DAPPDVHDEL (107 aa)) is activation peptide. 3 disulfides stabilise this stretch: Cys-147–Cys-188, Cys-181–Cys-221, and Cys-276–Cys-324. Cys-150 is a catalytic residue. A glycan (N-linked (GlcNAc...) asparagine; by host) is linked at Asn-172. Catalysis depends on residues His-283 and Asn-303.

This sequence belongs to the peptidase C1 family. In terms of processing, synthesized as an inactive proenzyme and activated by proteolytic removal of the inhibitory propeptide.

It carries out the reaction Endopeptidase of broad specificity, hydrolyzing substrates of both cathepsin L and cathepsin B.. Cysteine protease that plays an essential role in host liquefaction to facilitate horizontal transmission of the virus. May participate in the degradation of foreign protein expressed by the baculovirus system. The sequence is that of Viral cathepsin (VCATH) from Adoxophyes honmai (Smaller tea tortrix moth).